A 4538-amino-acid polypeptide reads, in one-letter code: Polyketide synthase PksL (4538 aa).

The segment at 1–123 (MRWRSNVKKI…ADMHADSPAI (123 aa)) is N-terminal hotdog fold 1. Positions 1–285 (MRWRSNVKKI…SKLVREAELI (285 aa)) constitute a PKS/mFAS DH 1 domain. The active-site Proton acceptor; for dehydratase activity 1 is the His26. The tract at residues 138-285 (QNVVQLDDVY…SKLVREAELI (148 aa)) is C-terminal hotdog fold 1. Asp199 acts as the Proton donor; for dehydratase activity 1 in catalysis. The disordered stretch occupies residues 289 to 314 (HQDAQETQMTRADTAERDKPADMVSS). The Carrier 1 domain occupies 320–394 (SEAEQFVSQL…ELSAFLAEEY (75 aa)). O-(pantetheine 4'-phosphoryl)serine is present on Ser354. A Ketosynthase family 3 (KS3) 1 domain is found at 433 to 871 (AGDIAIIGLA…GSNAHIILEE (439 aa)). Active-site for beta-ketoacyl synthase 1 activity residues include Cys609, His744, and His784. Positions 1048-1226 (HILHPLLHQN…DSLYAGENGV (179 aa)) are dehydratase. Residues 1051–1175 (HPLLHQNVSD…GSAVLCEAGE (125 aa)) are N-terminal hotdog fold 2. Residues 1051–1340 (HPLLHQNVSD…ARVLETDQEG (290 aa)) enclose the PKS/mFAS DH 2 domain. His1080 acts as the Proton acceptor; for dehydratase activity 2 in catalysis. Residues 1189–1340 (NGRTLSPFDC…ARVLETDQEG (152 aa)) form a C-terminal hotdog fold 2 region. Asp1251 serves as the catalytic Proton donor; for dehydratase activity 2. The beta-ketoacyl reductase 1 stretch occupies residues 1520-1713 (KGVYLITGGA…WKDGGMQIDA (194 aa)). Positions 1800–1873 (EKAENYFKQV…SLTRYFIDSR (74 aa)) constitute a Carrier 2 domain. Ser1834 is modified (O-(pantetheine 4'-phosphoryl)serine). Residues 1926–2365 (TEEIAIIGIS…GVNAHILIEE (440 aa)) form the Ketosynthase family 3 (KS3) 2 domain. Residues Cys2103, His2238, and His2278 each act as for beta-ketoacyl synthase 2 activity in the active site. The segment at 2546-2568 (TEEPFAPVQPVIPKPSVDREASG) is disordered. Carrier domains follow at residues 2597-2674 (ITAE…AHEL) and 2738-2815 (VAIE…KSEL). 2 positions are modified to O-(pantetheine 4'-phosphoryl)serine: Ser2634 and Ser2775. Positions 2828 to 2854 (SFEAAQQKPAASSHPKPAERPLQPVQH) are disordered. In terms of domain architecture, Ketosynthase family 3 (KS3) 3 spans 2873–3294 (EDAIAIVGMS…GTNAHIVIEE (422 aa)). Catalysis depends on for beta-ketoacyl synthase 3 activity residues Cys3040, His3175, and His3215. The segment at 3686-3887 (DKVLLITGGT…PNWKETGLGE (202 aa)) is beta-ketoacyl reductase 2. Positions 3960–4037 (NLFPETVDWL…SFAHWLISKY (78 aa)) constitute a Carrier 5 domain. Residue Ser3997 is modified to O-(pantetheine 4'-phosphoryl)serine. In terms of domain architecture, Ketosynthase family 3 (KS3) 4 spans 4082–4485 (AEDIAIIGLS…GTNAHLIIEG (404 aa)). Cys4237 serves as the catalytic For beta-ketoacyl synthase 4 activity.

It depends on pantetheine 4'-phosphate as a cofactor.

The protein localises to the cytoplasm. It participates in antibiotic biosynthesis; bacillaene biosynthesis. Involved in some intermediate steps for the synthesis of the antibiotic polyketide bacillaene which is involved in secondary metabolism. The protein is Polyketide synthase PksL (pksL) of Bacillus subtilis (strain 168).